A 364-amino-acid chain; its full sequence is MAQTLLNDTFLRALLREPTDYTPIWLMRQAGRYLPEYNATRARAGSFLGLAKQPDYATEVTLQPLERFPLDAAILFSDILTIPDAMGLGLDFAAGEGPKFAHPVRTEADVAKLAVPDIGATLGYVTDAVREIRRALTDGEGRQRVPLIGFSGSPWTLACYMVEGGGSDDFRTVKSMAYARPDLMHRILDVNAQAVAAYLNAQIEAGAQAVMIFDTWGGALADGAYQRFSLDYVRRVLAQLKREHDGARVPAIAFTKGGGLWLEELAATGVDAVGLDWTVNLGRARERVAGRVALQGNLDPTILFAPPEAIRAEARAVLDSYGNHPGHVFNLGHGISQFTPPEHVAELVDEVHRHSRAIRSGAGS.

Substrate-binding positions include 28–32, D78, Y160, T215, and H333; that span reads RQAGR.

This sequence belongs to the uroporphyrinogen decarboxylase family. In terms of assembly, homodimer.

The protein localises to the cytoplasm. The catalysed reaction is uroporphyrinogen III + 4 H(+) = coproporphyrinogen III + 4 CO2. It participates in porphyrin-containing compound metabolism; protoporphyrin-IX biosynthesis; coproporphyrinogen-III from 5-aminolevulinate: step 4/4. Its function is as follows. Catalyzes the decarboxylation of four acetate groups of uroporphyrinogen-III to yield coproporphyrinogen-III. The polypeptide is Uroporphyrinogen decarboxylase (Burkholderia pseudomallei (strain 668)).